The chain runs to 129 residues: 4-amino-4-deoxychorismate mutase (129 aa).

In terms of domain architecture, Chorismate mutase spans 16-107 (AAATDPLDAL…ETCRLEDEWI (92 aa)).

It catalyses the reaction 4-amino-4-deoxychorismate = 4-amino-4-deoxyprephenate. The protein operates within antibiotic biosynthesis. In terms of biological role, involved in pristinamycin I biosynthesis. Probably catalyzes the conversion of 4-amino-4-deoxychorismate to 4-amino-4-deoxyprephenate. The sequence is that of 4-amino-4-deoxychorismate mutase from Streptomyces pristinaespiralis.